A 321-amino-acid polypeptide reads, in one-letter code: Malate dehydrogenase (321 aa).

NAD(+) contacts are provided by residues 10-15 (GAGQIG) and Asp-34. 2 residues coordinate substrate: Arg-83 and Arg-89. NAD(+) contacts are provided by residues Asn-96 and 119-121 (ITN). Asn-121 and Arg-152 together coordinate substrate. His-176 functions as the Proton acceptor in the catalytic mechanism.

This sequence belongs to the LDH/MDH superfamily. MDH type 3 family.

It catalyses the reaction (S)-malate + NAD(+) = oxaloacetate + NADH + H(+). Functionally, catalyzes the reversible oxidation of malate to oxaloacetate. In Methylocella silvestris (strain DSM 15510 / CIP 108128 / LMG 27833 / NCIMB 13906 / BL2), this protein is Malate dehydrogenase.